Reading from the N-terminus, the 293-residue chain is Ribosomal protein L11 methyltransferase (293 aa).

Thr-145, Gly-166, Asp-188, and Asn-230 together coordinate S-adenosyl-L-methionine.

Belongs to the methyltransferase superfamily. PrmA family.

It localises to the cytoplasm. The catalysed reaction is L-lysyl-[protein] + 3 S-adenosyl-L-methionine = N(6),N(6),N(6)-trimethyl-L-lysyl-[protein] + 3 S-adenosyl-L-homocysteine + 3 H(+). In terms of biological role, methylates ribosomal protein L11. In Escherichia coli O81 (strain ED1a), this protein is Ribosomal protein L11 methyltransferase.